A 485-amino-acid chain; its full sequence is Adenosylhomocysteinase (485 aa).

Residues Thr-64, Asp-139, and Glu-205 each contribute to the substrate site. Residue 206-208 participates in NAD(+) binding; it reads TTT. Lys-235 and Asp-239 together coordinate substrate. Residues Asn-240, 269–274, Glu-292, Asn-327, 348–350, and Asn-397 contribute to the NAD(+) site; these read GYGDVG and IGH.

The protein belongs to the adenosylhomocysteinase family. Homotetramer. NAD(+) serves as cofactor.

The enzyme catalyses S-adenosyl-L-homocysteine + H2O = L-homocysteine + adenosine. It functions in the pathway amino-acid biosynthesis; L-homocysteine biosynthesis; L-homocysteine from S-adenosyl-L-homocysteine: step 1/1. Adenosylhomocysteine is a competitive inhibitor of S-adenosyl-L-methionine-dependent methyl transferase reactions; therefore adenosylhomocysteinase may play a key role in the control of methylations via regulation of the intracellular concentration of adenosylhomocysteine. This is Adenosylhomocysteinase (SAHH) from Triticum aestivum (Wheat).